The sequence spans 315 residues: Ribosomal protein L11 methyltransferase (315 aa).

The S-adenosyl-L-methionine site is built by T161, G182, D204, and N248.

This sequence belongs to the methyltransferase superfamily. PrmA family.

Its subcellular location is the cytoplasm. It catalyses the reaction L-lysyl-[protein] + 3 S-adenosyl-L-methionine = N(6),N(6),N(6)-trimethyl-L-lysyl-[protein] + 3 S-adenosyl-L-homocysteine + 3 H(+). Functionally, methylates ribosomal protein L11. The protein is Ribosomal protein L11 methyltransferase of Shouchella clausii (strain KSM-K16) (Alkalihalobacillus clausii).